We begin with the raw amino-acid sequence, 586 residues long: A-type ATP synthase subunit A (586 aa).

ATP is bound at residue 232-239 (GPFGSGKT).

Belongs to the ATPase alpha/beta chains family. As to quaternary structure, has multiple subunits with at least A(3), B(3), C, D, E, F, H, I and proteolipid K(x).

Its subcellular location is the cell membrane. It catalyses the reaction ATP + H2O + 4 H(+)(in) = ADP + phosphate + 5 H(+)(out). Functionally, component of the A-type ATP synthase that produces ATP from ADP in the presence of a proton gradient across the membrane. The A chain is the catalytic subunit. The protein is A-type ATP synthase subunit A of Methanococcus maripaludis (strain DSM 14266 / JCM 13030 / NBRC 101832 / S2 / LL).